A 281-amino-acid polypeptide reads, in one-letter code: Tetraspanin-33 (281 aa).

The Cytoplasmic portion of the chain corresponds to 1-23; that stretch reads MGNAKRATQNDEDYTFVSPVVKY. The chain crosses the membrane as a helical span at residues 24 to 44; it reads LLFFFNMIFWIISLVLISIGV. Residues 45–62 lie on the Extracellular side of the membrane; it reads YSRIVKHETALACLTVDP. A helical membrane pass occupies residues 63–83; that stretch reads ALILMVVGILMFFITFCGCVG. The Cytoplasmic segment spans residues 84 to 94; that stretch reads SLRENICLLQT. A helical membrane pass occupies residues 95 to 115; that stretch reads FCIFLTIMFLLQLLAGVLGFV. Residues 116–233 are Extracellular-facing; it reads FSDKARGKVT…DILVNWIHSN (118 aa). 4 disulfide bridges follow: cysteine 154–cysteine 222, cysteine 155–cysteine 187, cysteine 171–cysteine 181, and cysteine 188–cysteine 201. Asparagine 170 is a glycosylation site (N-linked (GlcNAc...) asparagine). The helical transmembrane segment at 234-254 threads the bilayer; it reads LFLLGGIALGLTIPQLVGILL. Over 255-281 the chain is Cytoplasmic; the sequence is SQVLINQIQDQIKLQNYNQQHRSDPWS.

It belongs to the tetraspanin (TM4SF) family. As to quaternary structure, homodimer; disulfide-linked.

The protein resides in the cell membrane. It is found in the cell junction. The protein localises to the adherens junction. It localises to the cytoplasm. In terms of biological role, part of TspanC8 subgroup, composed of 6 members that interact with the transmembrane metalloprotease ADAM10. This interaction is required for ADAM10 exit from the endoplasmic reticulum and for enzymatic maturation and trafficking to the cell surface as well as substrate specificity. Different TspanC8/ADAM10 complexes have distinct substrates. The polypeptide is Tetraspanin-33 (tspan33) (Danio rerio (Zebrafish)).